The chain runs to 62 residues: Large ribosomal subunit protein bL28 (62 aa).

The tract at residues Met-1–Arg-23 is disordered.

This sequence belongs to the bacterial ribosomal protein bL28 family.

The chain is Large ribosomal subunit protein bL28 from Brevibacillus brevis (strain 47 / JCM 6285 / NBRC 100599).